The following is a 139-amino-acid chain: Ribonuclease VapC39 (139 aa).

In terms of domain architecture, PINc spans 4 to 133 (LLDVNVLIAL…DAALADSASA (130 aa)). Mg(2+)-binding residues include Asp6 and Asp106.

This sequence belongs to the PINc/VapC protein family. Mg(2+) serves as cofactor.

Functionally, toxic component of a type II toxin-antitoxin (TA) system. An RNase. Its toxic effect is neutralized by coexpression with cognate antitoxin VapB39. The protein is Ribonuclease VapC39 of Mycobacterium tuberculosis (strain CDC 1551 / Oshkosh).